A 589-amino-acid chain; its full sequence is WD repeat-containing protein 26 homolog (589 aa).

A disordered region spans residues 1–57 (MGVVEDTEPPLKRAKRLADEPNGFSANSSVRGSSVNSNSLGDLMARPLPSQGDDETI). Residues 25–39 (SANSSVRGSSVNSNS) show a composition bias toward low complexity. One can recognise a LisH domain in the interval 64-96 (RKSEFVRIITRALYSLGYDKTGAMLEEESGISL). The CTLH domain occupies 97-154 (HNSTIKLFLQQVKDGKWDQSVKTLHRIGFPDEKAVKAASFLLLEQKFLEFLKVEKIAD). WD repeat units follow at residues 272 to 311 (SHTDEVWFLQFSHNGKYLASSSKDQTAIIWEISADGHISL), 317 to 358 (GHHK…HMYE), 360 to 398 (GGISPISCGWYPDGQGIIAGMTDRSICMWDLDGREKECW), 401 to 440 (QRTQKVSDIAMTDDGKWLVSVCKDSVISLFDREATVERLI), 442 to 480 (EEDMITSFSLSNDNKYILVNLLNQEIRLWNIEGDPKIVS), 484 to 526 (GHKR…LIVE), and 529 to 569 (GHAG…QQNQ).

As to quaternary structure, interacts with RANBPM. In terms of tissue distribution, expressed in roots, leaves and flowers.

The protein resides in the cytoplasm. Functionally, acts as a component involved in the crosstalk regulation between light, hormone and abiotic stress response. The protein is WD repeat-containing protein 26 homolog of Arabidopsis thaliana (Mouse-ear cress).